The primary structure comprises 144 residues: MSMMSEFKTFAMRGNVIDLAVGVIIGAAFGKIVDSVVNDLIMPVIGRIVGKLDFSNMFVTLAEPPPGTPMTLDALKKAGVPVFAYGNFLTIVVNFVILAFIIFLMVRAFNKMRAEEPAPAEPPPPPEDIVLLREIRDSLKTRQP.

2 consecutive transmembrane segments (helical) span residues 16 to 36 and 86 to 106; these read VIDL…VDSV and GNFL…FLMV.

This sequence belongs to the MscL family. As to quaternary structure, homopentamer.

The protein localises to the cell inner membrane. Functionally, channel that opens in response to stretch forces in the membrane lipid bilayer. May participate in the regulation of osmotic pressure changes within the cell. This chain is Large-conductance mechanosensitive channel, found in Cupriavidus pinatubonensis (strain JMP 134 / LMG 1197) (Cupriavidus necator (strain JMP 134)).